Reading from the N-terminus, the 270-residue chain is Ribosomal RNA small subunit methyltransferase A (270 aa).

Asparagine 15, isoleucine 17, glycine 42, glutamate 64, aspartate 89, and asparagine 108 together coordinate S-adenosyl-L-methionine.

The protein belongs to the class I-like SAM-binding methyltransferase superfamily. rRNA adenine N(6)-methyltransferase family. RsmA subfamily.

It is found in the cytoplasm. It carries out the reaction adenosine(1518)/adenosine(1519) in 16S rRNA + 4 S-adenosyl-L-methionine = N(6)-dimethyladenosine(1518)/N(6)-dimethyladenosine(1519) in 16S rRNA + 4 S-adenosyl-L-homocysteine + 4 H(+). Its function is as follows. Specifically dimethylates two adjacent adenosines (A1518 and A1519) in the loop of a conserved hairpin near the 3'-end of 16S rRNA in the 30S particle. May play a critical role in biogenesis of 30S subunits. This Anaplasma marginale (strain Florida) protein is Ribosomal RNA small subunit methyltransferase A.